The chain runs to 198 residues: Probable GTP-binding protein EngB (198 aa).

Positions 36-198 (SDPQFAFIGR…NLSKLQELLE (163 aa)) constitute an EngB-type G domain. GTP is bound by residues 44–51 (GRSNVGKS), 70–74 (GRTQL), 88–91 (DLPG), 155–158 (NKID), and 182–184 (ISA). 2 residues coordinate Mg(2+): serine 51 and threonine 72.

This sequence belongs to the TRAFAC class TrmE-Era-EngA-EngB-Septin-like GTPase superfamily. EngB GTPase family. The cofactor is Mg(2+).

Necessary for normal cell division and for the maintenance of normal septation. This chain is Probable GTP-binding protein EngB, found in Mesomycoplasma hyopneumoniae (strain J / ATCC 25934 / NCTC 10110) (Mycoplasma hyopneumoniae).